The following is a 250-amino-acid chain: Hydroxyacylglutathione hydrolase (250 aa).

Residues His-52, His-54, Asp-56, His-57, His-107, Asp-128, and His-166 each coordinate Zn(2+).

Belongs to the metallo-beta-lactamase superfamily. Glyoxalase II family. As to quaternary structure, monomer. It depends on Zn(2+) as a cofactor.

It catalyses the reaction an S-(2-hydroxyacyl)glutathione + H2O = a 2-hydroxy carboxylate + glutathione + H(+). It participates in secondary metabolite metabolism; methylglyoxal degradation; (R)-lactate from methylglyoxal: step 2/2. In terms of biological role, thiolesterase that catalyzes the hydrolysis of S-D-lactoyl-glutathione to form glutathione and D-lactic acid. This is Hydroxyacylglutathione hydrolase from Neisseria gonorrhoeae (strain ATCC 700825 / FA 1090).